A 1598-amino-acid polypeptide reads, in one-letter code: Mushroom body large-type Kenyon cell-specific protein 1 (1598 aa).

4 disordered regions span residues 83-105 (PGNL…SLPA), 140-387 (RHHH…SDGI), 436-462 (PHDD…PMSV), and 495-525 (PLVG…SQDN). Residues 140-151 (RHHHLQNHHHHL) show a composition bias toward basic residues. Residues 164–174 (QQQQQQQQRQQ) show a composition bias toward low complexity. A compositionally biased stretch (basic and acidic residues) spans 175 to 191 (QRQEERRLRPDEIKVEV). Residues 210 to 263 (STDASTPATVTTTGATTTLPAASATGTGPATPSAVVATSNATAAMTTGTTTIPT) are compositionally biased toward low complexity. Over residues 275-291 (EGADDRDDDEENEEEED) the composition is skewed to acidic residues. Composition is skewed to basic and acidic residues over residues 292-305 (GRGQ…LKLD), 315-324 (LRREKDRGSR), and 335-346 (DGTKERTEEVAL). Position 444 is a phosphoserine; by MAPK (Ser444). Residues 445–461 (PQSDSSSSSRSAESPMS) show a composition bias toward low complexity. One can recognise an HTH psq-type 1 domain in the interval 582-634 (VGAGGGRRAYTEEELQAALRDIQSGKLGTRRAAVIYGIPRSTLRNKVYKLAME). Positions 610 to 630 (TRRAAVIYGIPRSTLRNKVYK) form a DNA-binding region, H-T-H motif. 6 disordered regions span residues 636-705 (ERDA…SGAE), 797-877 (RLSK…DSAQ), 962-1045 (GQTV…NYDR), 1082-1145 (ERHL…NGIK), 1248-1283 (ETSA…NGSF), and 1301-1598 (RAMT…SVEQ). Low complexity predominate over residues 653 to 687 (APATTITTITTTTTTTTTTTTTTTTPNTTQNASAT). A compositionally biased stretch (acidic residues) spans 694-705 (DEVDDKELSGAE). Positions 820-855 (THPQAQAQAQPQQQQQQQQQQPQQQQQQQQQQQQQQ) are enriched in low complexity. Residues 965–975 (VSGGGMGGCQP) show a composition bias toward gly residues. Positions 1003–1021 (ANAQQGQAQAQAKPQSQEA) are enriched in low complexity. The HTH psq-type 2 domain maps to 1034-1086 (RPKRGKYRNYDRDSLVEAVRAVQRGEMSVHRAGSYYGVPHSTLEYKVKERHLM). Positions 1062–1082 (VHRAGSYYGVPHSTLEYKVKE) form a DNA-binding region, H-T-H motif. Positions 1093–1102 (QKQSDDKTKE) are enriched in basic and acidic residues. Over residues 1103-1120 (TSTVTAAAAATNIRPGTA) the composition is skewed to low complexity. Residues 1309–1318 (QQQQASSQQQ) show a composition bias toward low complexity. Composition is skewed to basic and acidic residues over residues 1383–1392 (DRGRNDDGSD) and 1407–1442 (GSRD…DRKT). A compositionally biased stretch (low complexity) spans 1447–1466 (PQQPQQQQQQQQQQQQQQQQ). Residues 1481–1497 (TDKKSACDSKLIVDHSS) are compositionally biased toward basic and acidic residues. Residues 1501–1547 (QQQQPQQQQQQQQQQQPQQQSQQPQQQQPQPQQQQQQQQQQQPQQQQ) are compositionally biased toward low complexity. Over residues 1562–1577 (RGYNSGNNRSGEQANS) the composition is skewed to polar residues.

Homodimer. In terms of tissue distribution, large-type Kenyon cells of mushroom body.

The protein resides in the nucleus. Its function is as follows. Transcriptional activator which binds to the consensus sequence 5'-CCCTATCGATCGATCTCTACCT-3'. May play a role in higher-order sensory processing. This chain is Mushroom body large-type Kenyon cell-specific protein 1 (Mblk-1), found in Apis mellifera (Honeybee).